A 295-amino-acid polypeptide reads, in one-letter code: Pyridoxal 5'-phosphate synthase subunit PdxS (295 aa).

Aspartate 25 lines the D-ribose 5-phosphate pocket. Lysine 82 functions as the Schiff-base intermediate with D-ribose 5-phosphate in the catalytic mechanism. Glycine 154 is a binding site for D-ribose 5-phosphate. Arginine 166 serves as a coordination point for D-glyceraldehyde 3-phosphate. D-ribose 5-phosphate is bound by residues glycine 215 and 236–237 (GS).

Belongs to the PdxS/SNZ family. As to quaternary structure, in the presence of PdxT, forms a dodecamer of heterodimers.

The enzyme catalyses aldehydo-D-ribose 5-phosphate + D-glyceraldehyde 3-phosphate + L-glutamine = pyridoxal 5'-phosphate + L-glutamate + phosphate + 3 H2O + H(+). It participates in cofactor biosynthesis; pyridoxal 5'-phosphate biosynthesis. Catalyzes the formation of pyridoxal 5'-phosphate from ribose 5-phosphate (RBP), glyceraldehyde 3-phosphate (G3P) and ammonia. The ammonia is provided by the PdxT subunit. Can also use ribulose 5-phosphate and dihydroxyacetone phosphate as substrates, resulting from enzyme-catalyzed isomerization of RBP and G3P, respectively. The protein is Pyridoxal 5'-phosphate synthase subunit PdxS of Actinobacillus pleuropneumoniae serotype 5b (strain L20).